The chain runs to 326 residues: Fructose-1,6-bisphosphatase class 1 2 (326 aa).

Residues Glu-84, Asp-103, Leu-105, and Asp-106 each contribute to the Mg(2+) site. Residues 106-109 (DGSS), Asn-198, and Lys-262 contribute to the substrate site. Glu-268 lines the Mg(2+) pocket.

It belongs to the FBPase class 1 family. In terms of assembly, homotetramer. The cofactor is Mg(2+).

The protein resides in the cytoplasm. The catalysed reaction is beta-D-fructose 1,6-bisphosphate + H2O = beta-D-fructose 6-phosphate + phosphate. The protein operates within carbohydrate biosynthesis; gluconeogenesis. The protein is Fructose-1,6-bisphosphatase class 1 2 of Pseudoalteromonas translucida (strain TAC 125).